Reading from the N-terminus, the 289-residue chain is ATP synthase subunit a (289 aa).

Helical transmembrane passes span 43–63 (AFHLDTLGWSVALGLIFVLIF), 104–124 (IAPLALTIFVWVFLMNAVDLI), 160–180 (LSVFALIIFYSIKVKGIGGFI), 193–213 (IFVQALLIPVNFLLEFVTLIA), 232–252 (VFILIAVMFGSGLLWLSGLGV), and 259–279 (AVFHILIITLQAFIFMMLTIV).

It belongs to the ATPase A chain family. F-type ATPases have 2 components, CF(1) - the catalytic core - and CF(0) - the membrane proton channel. CF(1) has five subunits: alpha(3), beta(3), gamma(1), delta(1), epsilon(1). CF(0) has three main subunits: a(1), b(2) and c(9-12). The alpha and beta chains form an alternating ring which encloses part of the gamma chain. CF(1) is attached to CF(0) by a central stalk formed by the gamma and epsilon chains, while a peripheral stalk is formed by the delta and b chains.

It is found in the cell inner membrane. Its function is as follows. Key component of the proton channel; it plays a direct role in the translocation of protons across the membrane. This Pseudomonas fluorescens (strain SBW25) protein is ATP synthase subunit a.